Here is a 64-residue protein sequence, read N- to C-terminus: Prokaryotic ubiquitin-like protein Pup (64 aa).

A compositionally biased stretch (basic and acidic residues) spans Met-1–Gly-11. A disordered region spans residues Met-1–Asp-38. Residues Asp-21–Tyr-58 form an ARC ATPase binding region. Residues Ala-24–Glu-52 are a coiled coil. A Deamidated glutamine modification is found at Gln-64. An Isoglutamyl lysine isopeptide (Gln-Lys) (interchain with K-? in acceptor proteins) cross-link involves residue Gln-64.

Belongs to the prokaryotic ubiquitin-like protein family. Strongly interacts with the proteasome-associated ATPase ARC through a hydrophobic interface; the interacting region of Pup lies in its C-terminal half. There is one Pup binding site per ARC hexamer ring. Is modified by deamidation of its C-terminal glutamine to glutamate by the deamidase Dop, a prerequisite to the subsequent pupylation process.

The protein operates within protein degradation; proteasomal Pup-dependent pathway. Functionally, protein modifier that is covalently attached to lysine residues of substrate proteins, thereby targeting them for proteasomal degradation. The tagging system is termed pupylation. The protein is Prokaryotic ubiquitin-like protein Pup of Rhodococcus opacus (strain B4).